We begin with the raw amino-acid sequence, 150 residues long: Helix-loop-helix protein hlh-12 (150 aa).

A disordered region spans residues 1 to 24; it reads MAKKPRVTKLNTDRRSRANERERQ. Positions 11–24 are enriched in basic and acidic residues; sequence NTDRRSRANERERQ. The basic motif stretch occupies residues 13 to 26; it reads DRRSRANERERQRV. Residues 13-65 form the bHLH domain; it reads DRRSRANERERQRVSEMNGMFDVLLNLLPPSHFKTRLSRVQILREATSYIIRL. The interval 27–65 is helix-loop-helix motif; it reads SEMNGMFDVLLNLLPPSHFKTRLSRVQILREATSYIIRL.

Forms a heterodimer with helix-loop-helix protein hlh-2.

It localises to the nucleus. Transcription factor which binds the E box motif 5'-GCAGGTG-3'. Involved in migration of the gonadal leader cells; distal tip cells (DTCs) in hermaphrodites, and linker cells in males. Positively regulates expression of alpha integrin ina-1 and ADAMTS protease gon-1. In Caenorhabditis elegans, this protein is Helix-loop-helix protein hlh-12.